A 183-amino-acid polypeptide reads, in one-letter code: UPF0316 protein BcerKBAB4_3093 (183 aa).

A run of 3 helical transmembrane segments spans residues 6 to 26, 32 to 52, and 58 to 78; these read LIFV…ILLV, SAAG…GIVF, and WMNI…GGYI.

This sequence belongs to the UPF0316 family.

The protein resides in the cell membrane. This chain is UPF0316 protein BcerKBAB4_3093, found in Bacillus mycoides (strain KBAB4) (Bacillus weihenstephanensis).